Reading from the N-terminus, the 253-residue chain is Large ribosomal subunit protein uL10m (253 aa).

Residues 1-24 constitute a mitochondrion transit peptide; sequence MANLMQRSLPLTTTRTPVLQFLRF.

Belongs to the universal ribosomal protein uL10 family. Component of the mitochondrial ribosome large subunit (39S) which comprises a 16S rRNA and about 50 distinct proteins.

The protein resides in the mitochondrion. This is Large ribosomal subunit protein uL10m (mRpL10) from Drosophila pseudoobscura pseudoobscura (Fruit fly).